A 200-amino-acid chain; its full sequence is Histone chaperone asf1b (200 aa).

Belongs to the ASF1 family. In terms of assembly, interacts with histone H3 and histone H4.

Its subcellular location is the nucleus. Its function is as follows. Histone chaperone that facilitates histone deposition and histone exchange and removal during nucleosome assembly and disassembly. The chain is Histone chaperone asf1b (asf1b) from Xenopus tropicalis (Western clawed frog).